The primary structure comprises 374 residues: Tetraacyldisaccharide 4'-kinase (374 aa).

43 to 50 (TMGGTGKT) contacts ATP.

It belongs to the LpxK family.

The enzyme catalyses a lipid A disaccharide + ATP = a lipid IVA + ADP + H(+). The protein operates within glycolipid biosynthesis; lipid IV(A) biosynthesis; lipid IV(A) from (3R)-3-hydroxytetradecanoyl-[acyl-carrier-protein] and UDP-N-acetyl-alpha-D-glucosamine: step 6/6. Functionally, transfers the gamma-phosphate of ATP to the 4'-position of a tetraacyldisaccharide 1-phosphate intermediate (termed DS-1-P) to form tetraacyldisaccharide 1,4'-bis-phosphate (lipid IVA). In Leptospira biflexa serovar Patoc (strain Patoc 1 / Ames), this protein is Tetraacyldisaccharide 4'-kinase.